We begin with the raw amino-acid sequence, 356 residues long: Sterol-4-alpha-carboxylate 3-dehydrogenase, decarboxylating (356 aa).

Met1 is subject to N-acetylmethionine. Tyr155 functions as the Proton acceptor in the catalytic mechanism. Lys159 serves as a coordination point for NAD(+). The chain crosses the membrane as a helical span at residues 281 to 301; sequence WLAYYLALLVSLLVMVISPVI. The short motif at 353–356 is the Prevents secretion from ER element; the sequence is RKVM.

Belongs to the 3-beta-HSD family. In terms of assembly, homodimer.

The protein localises to the endoplasmic reticulum membrane. The protein resides in the lipid droplet. It carries out the reaction a 3beta-hydroxysteroid-4alpha-carboxylate + NADP(+) = a 3-oxosteroid + CO2 + NADPH. It catalyses the reaction a 3beta-hydroxysteroid-4alpha-carboxylate + NAD(+) = a 3-oxosteroid + CO2 + NADH. The enzyme catalyses 4alpha-carboxyzymosterol + NADP(+) = zymosterone + CO2 + NADPH. The catalysed reaction is 4alpha-carboxy-4beta-methyl-5alpha-cholest-8-en-3beta-ol + NADP(+) = 4alpha-methyl-5alpha-cholest-8-en-3-one + CO2 + NADPH. It carries out the reaction 4alpha-carboxy-5alpha-cholest-8-ene-3beta-ol + NADP(+) = 5alpha-cholest-8-en-3-one + CO2 + NADPH. It catalyses the reaction 4beta-methylzymosterol-4alpha-carboxylate + NADP(+) = 3-dehydro-4-methylzymosterol + CO2 + NADPH. The enzyme catalyses 4beta-methylzymosterol-4alpha-carboxylate + NAD(+) = 3-dehydro-4-methylzymosterol + CO2 + NADH. The catalysed reaction is 4alpha-carboxy-5alpha-cholest-8-ene-3beta-ol + NAD(+) = 5alpha-cholest-8-en-3-one + CO2 + NADH. It carries out the reaction 4alpha-carboxy-4beta-methyl-5alpha-cholest-8-en-3beta-ol + NAD(+) = 4alpha-methyl-5alpha-cholest-8-en-3-one + CO2 + NADH. It catalyses the reaction 4alpha-carboxyzymosterol + NAD(+) = zymosterone + CO2 + NADH. It functions in the pathway steroid biosynthesis; zymosterol biosynthesis; zymosterol from lanosterol: step 4/6. Functionally, catalyzes the NAD(P)(+)-dependent oxidative decarboxylation of the C4 methyl groups of 4-alpha-carboxysterols in post-squalene cholesterol biosynthesis. Also plays a role in the regulation of the endocytic trafficking of EGFR. This Bos taurus (Bovine) protein is Sterol-4-alpha-carboxylate 3-dehydrogenase, decarboxylating (NSDHL).